We begin with the raw amino-acid sequence, 301 residues long: Probable alpha-L-glutamate ligase (301 aa).

In terms of domain architecture, ATP-grasp spans leucine 104–glutamate 287. Residues lysine 141, glutamate 178–phenylalanine 179, aspartate 187, and arginine 211–asparagine 213 contribute to the ATP site. Aspartate 248, glutamate 260, and asparagine 262 together coordinate Mg(2+). Residues aspartate 248, glutamate 260, and asparagine 262 each contribute to the Mn(2+) site.

This sequence belongs to the RimK family. Mg(2+) serves as cofactor. Mn(2+) is required as a cofactor.

The chain is Probable alpha-L-glutamate ligase from Vibrio parahaemolyticus serotype O3:K6 (strain RIMD 2210633).